Consider the following 180-residue polypeptide: UPF0149 protein XCV3523 (180 aa).

Belongs to the UPF0149 family.

This is UPF0149 protein XCV3523 from Xanthomonas euvesicatoria pv. vesicatoria (strain 85-10) (Xanthomonas campestris pv. vesicatoria).